A 137-amino-acid chain; its full sequence is MMQPKKTKFRKAHKGRIHGVASSGATLAFGQFGLKAMAPERITARQIEAARRALTRHMKRAGRVWIRVFPDVPVSKKPAEVRMGSGKGAPELWVVRVKPGRVLFEIDGVAPQTAKEALTLAAAKLPIKTRFVARIAE.

The protein belongs to the universal ribosomal protein uL16 family. As to quaternary structure, part of the 50S ribosomal subunit.

Its function is as follows. Binds 23S rRNA and is also seen to make contacts with the A and possibly P site tRNAs. This chain is Large ribosomal subunit protein uL16, found in Nitrobacter winogradskyi (strain ATCC 25391 / DSM 10237 / CIP 104748 / NCIMB 11846 / Nb-255).